Here is a 303-residue protein sequence, read N- to C-terminus: 1D-myo-inositol 2-acetamido-2-deoxy-alpha-D-glucopyranoside deacetylase 1 (303 aa).

Zn(2+)-binding residues include His15, Asp18, and His157.

This sequence belongs to the MshB deacetylase family. It depends on Zn(2+) as a cofactor.

It catalyses the reaction 1D-myo-inositol 2-acetamido-2-deoxy-alpha-D-glucopyranoside + H2O = 1D-myo-inositol 2-amino-2-deoxy-alpha-D-glucopyranoside + acetate. Functionally, catalyzes the deacetylation of 1D-myo-inositol 2-acetamido-2-deoxy-alpha-D-glucopyranoside (GlcNAc-Ins) in the mycothiol biosynthesis pathway. The sequence is that of 1D-myo-inositol 2-acetamido-2-deoxy-alpha-D-glucopyranoside deacetylase 1 from Saccharopolyspora erythraea (strain ATCC 11635 / DSM 40517 / JCM 4748 / NBRC 13426 / NCIMB 8594 / NRRL 2338).